A 244-amino-acid polypeptide reads, in one-letter code: Type III pantothenate kinase (244 aa).

An ATP-binding site is contributed by 6–13 (DVGNTRIK). Substrate contacts are provided by residues Tyr87 and 94–97 (GIDR). Asp96 acts as the Proton acceptor in catalysis. Asp117 is a binding site for K(+). ATP is bound at residue Thr120. Thr172 is a binding site for substrate.

Belongs to the type III pantothenate kinase family. As to quaternary structure, homodimer. Requires NH4(+) as cofactor. It depends on K(+) as a cofactor.

The protein resides in the cytoplasm. It carries out the reaction (R)-pantothenate + ATP = (R)-4'-phosphopantothenate + ADP + H(+). It functions in the pathway cofactor biosynthesis; coenzyme A biosynthesis; CoA from (R)-pantothenate: step 1/5. In terms of biological role, catalyzes the phosphorylation of pantothenate (Pan), the first step in CoA biosynthesis. The protein is Type III pantothenate kinase of Flavobacterium johnsoniae (strain ATCC 17061 / DSM 2064 / JCM 8514 / BCRC 14874 / CCUG 350202 / NBRC 14942 / NCIMB 11054 / UW101) (Cytophaga johnsonae).